A 310-amino-acid chain; its full sequence is Porphobilinogen deaminase (310 aa).

S-(dipyrrolylmethanemethyl)cysteine is present on Cys-242.

This sequence belongs to the HMBS family. Monomer. Dipyrromethane serves as cofactor.

The catalysed reaction is 4 porphobilinogen + H2O = hydroxymethylbilane + 4 NH4(+). The protein operates within porphyrin-containing compound metabolism; protoporphyrin-IX biosynthesis; coproporphyrinogen-III from 5-aminolevulinate: step 2/4. Its function is as follows. Tetrapolymerization of the monopyrrole PBG into the hydroxymethylbilane pre-uroporphyrinogen in several discrete steps. This is Porphobilinogen deaminase from Shewanella oneidensis (strain ATCC 700550 / JCM 31522 / CIP 106686 / LMG 19005 / NCIMB 14063 / MR-1).